We begin with the raw amino-acid sequence, 251 residues long: MSVTMRQMLEAGVHFGHQTRFWNPKMAPYIFGQRNKIHIVNLEHTLVMFRDALDYARRLAANKETILFVGTKRQARDIVKEEAIRCGAPYVNQRWLGGMLTNFKTIRQSIKRLQDMEKMVQDGTLNKLVKKEALDFQRELEKLNASLGGIKEMKGLPDAMFVIDVGYQKGTIIEANKLGIPVVGVVDTNHNPAGIQYVIPGNDDSSQAIRLYARAMADAILEGRNQAIQEIVEIGKTDSEVLSGQDLSADA.

The protein belongs to the universal ribosomal protein uS2 family.

In Nitrosomonas eutropha (strain DSM 101675 / C91 / Nm57), this protein is Small ribosomal subunit protein uS2.